The following is a 37-amino-acid chain: Large ribosomal subunit protein bL36 (37 aa).

This sequence belongs to the bacterial ribosomal protein bL36 family.

The chain is Large ribosomal subunit protein bL36 from Laribacter hongkongensis (strain HLHK9).